The primary structure comprises 51 residues: AMVTKNNGDLDKSGTECRLYCKDNSPGQNNSCKMFYSNEDEHKGMVLPGTK.

Positions 1–12 (AMVTKNNGDLDK) constitute a Peptidase M12B domain. One can recognise a Disintegrin domain in the interval 13 to 18 (SGTECR). A glycan (N-linked (GlcNAc...) asparagine) is linked at Asn29.

Belongs to the venom metalloproteinase (M12B) family. P-III subfamily. P-IIIa sub-subfamily. In terms of assembly, monomer. The cofactor is Zn(2+). Expressed by the venom gland.

It is found in the secreted. Functionally, snake venom zinc metalloproteinase-disintegrin-like that blocks the interaction between platelets and collagen fibers through its binding to collagen fibers, resulting in the blockade of collagen-mediated platelet functions such as adhesion, release reaction, thromboxane formation, and aggregation. Binds selectively to collagen type I with high affinity. Also exerts proteolytic activity to matrix. This chain is Zinc metalloproteinase-disintegrin-like crovidisin, found in Crotalus viridis viridis (Prairie rattlesnake).